Consider the following 119-residue polypeptide: Ribosome-binding factor A (119 aa).

Belongs to the RbfA family. Monomer. Binds 30S ribosomal subunits, but not 50S ribosomal subunits or 70S ribosomes.

Its subcellular location is the cytoplasm. In terms of biological role, one of several proteins that assist in the late maturation steps of the functional core of the 30S ribosomal subunit. Associates with free 30S ribosomal subunits (but not with 30S subunits that are part of 70S ribosomes or polysomes). Required for efficient processing of 16S rRNA. May interact with the 5'-terminal helix region of 16S rRNA. The protein is Ribosome-binding factor A of Wolinella succinogenes (strain ATCC 29543 / DSM 1740 / CCUG 13145 / JCM 31913 / LMG 7466 / NCTC 11488 / FDC 602W) (Vibrio succinogenes).